Reading from the N-terminus, the 350-residue chain is Biotin synthase (350 aa).

Residues 38–262 form the Radical SAM core domain; that stretch reads RQVQVSTLLS…MMPTSYVRLS (225 aa). [4Fe-4S] cluster is bound by residues cysteine 53, cysteine 57, and cysteine 60. Residues cysteine 97, cysteine 128, cysteine 188, and arginine 260 each contribute to the [2Fe-2S] cluster site.

Belongs to the radical SAM superfamily. Biotin synthase family. Homodimer. Requires [4Fe-4S] cluster as cofactor. The cofactor is [2Fe-2S] cluster.

The enzyme catalyses (4R,5S)-dethiobiotin + (sulfur carrier)-SH + 2 reduced [2Fe-2S]-[ferredoxin] + 2 S-adenosyl-L-methionine = (sulfur carrier)-H + biotin + 2 5'-deoxyadenosine + 2 L-methionine + 2 oxidized [2Fe-2S]-[ferredoxin]. It functions in the pathway cofactor biosynthesis; biotin biosynthesis; biotin from 7,8-diaminononanoate: step 2/2. Its function is as follows. Catalyzes the conversion of dethiobiotin (DTB) to biotin by the insertion of a sulfur atom into dethiobiotin via a radical-based mechanism. This is Biotin synthase from Yersinia enterocolitica serotype O:8 / biotype 1B (strain NCTC 13174 / 8081).